The following is a 393-amino-acid chain: DNA primase small subunit PriS (393 aa).

Catalysis depends on residues Asp100, Asp102, and Asp296.

The protein belongs to the eukaryotic-type primase small subunit family. In terms of assembly, heterodimer of a small subunit (PriS) and a large subunit (PriL). Requires Mg(2+) as cofactor. Mn(2+) is required as a cofactor.

Its function is as follows. Catalytic subunit of DNA primase, an RNA polymerase that catalyzes the synthesis of short RNA molecules used as primers for DNA polymerase during DNA replication. The small subunit contains the primase catalytic core and has DNA synthesis activity on its own. Binding to the large subunit stabilizes and modulates the activity, increasing the rate of DNA synthesis while decreasing the length of the DNA fragments, and conferring RNA synthesis capability. The DNA polymerase activity may enable DNA primase to also catalyze primer extension after primer synthesis. May also play a role in DNA repair. In Natronomonas pharaonis (strain ATCC 35678 / DSM 2160 / CIP 103997 / JCM 8858 / NBRC 14720 / NCIMB 2260 / Gabara) (Halobacterium pharaonis), this protein is DNA primase small subunit PriS.